Consider the following 248-residue polypeptide: Flavodoxin/ferredoxin--NADP reductase (248 aa).

The 100-residue stretch at 2-101 (ADWVTGKVTK…SEAAGFFVLD (100 aa)) folds into the FAD-binding FR-type domain. Residues 50 to 53 (RAYS), Tyr-66, 74 to 76 (KLS), and Thr-116 contribute to the FAD site. Residues 143–144 (AR), 173–174 (SR), Arg-184, 214–216 (NPQ), and Asp-220 each bind NADP(+). 247–248 (YW) contributes to the FAD binding site.

Belongs to the ferredoxin--NADP reductase type 1 family. Requires FAD as cofactor.

Its subcellular location is the cytoplasm. The enzyme catalyses 2 reduced [2Fe-2S]-[ferredoxin] + NADP(+) + H(+) = 2 oxidized [2Fe-2S]-[ferredoxin] + NADPH. It carries out the reaction reduced [flavodoxin] + NADP(+) = oxidized [flavodoxin] + NADPH + 2 H(+). Functionally, transports electrons between flavodoxin or ferredoxin and NADPH. This Shigella flexneri protein is Flavodoxin/ferredoxin--NADP reductase (fpr).